The sequence spans 839 residues: Homeobox-leucine zipper protein HOX10 (839 aa).

2 disordered regions span residues 1–24 (MAAA…SGMD) and 132–157 (QNTP…RDAS). The segment at residues 24-87 (DSGKYVRYTP…NRRCRDKQRK (64 aa)) is a DNA-binding region (homeobox). Positions 91-134 (RLQAVNRKLTAMNKLLMEENERLQKQVSQLVHENAHMRQQLQNT) form a coiled coil. One can recognise an START domain in the interval 155-383 (DASNPSGLLS…IAQETSGEVV (229 aa)).

This sequence belongs to the HD-ZIP homeobox family. Class III subfamily. As to expression, expressed in stems, leaf sheaths and blades and panicles.

It localises to the nucleus. Its function is as follows. Probable transcription factor. The chain is Homeobox-leucine zipper protein HOX10 (HOX10) from Oryza sativa subsp. japonica (Rice).